We begin with the raw amino-acid sequence, 324 residues long: Probable cell division protein WhiA (324 aa).

Residues 276 to 310 constitute a DNA-binding region (H-T-H motif); it reads TLKELGEMMQGGKVSKSGINHRLRKIDEFADKLRN.

The protein belongs to the WhiA family.

Functionally, involved in cell division and chromosome segregation. The chain is Probable cell division protein WhiA from Shouchella clausii (strain KSM-K16) (Alkalihalobacillus clausii).